The following is a 61-amino-acid chain: Truncated Cytokine response-modifying protein B (61 aa).

The protein is truncated in this strain and presumably inactive. It has similarities with variola virus CrmB, but the product is inactivated due to several premature stop codon. The protein is Truncated Cytokine response-modifying protein B of Bos taurus (Bovine).